Here is a 479-residue protein sequence, read N- to C-terminus: Ubiquinone biosynthesis monooxygenase COQ6, mitochondrial (479 aa).

This sequence belongs to the UbiH/COQ6 family. Component of a multi-subunit COQ enzyme complex, composed of at least COQ3, COQ4, COQ5, COQ6, COQ7 and COQ9. FAD serves as cofactor.

It is found in the mitochondrion inner membrane. The catalysed reaction is 4-hydroxy-3-(all-trans-decaprenyl)benzoate + 2 reduced [2Fe-2S]-[ferredoxin] + O2 + 2 H(+) = 3,4-dihydroxy-5-(all-trans-decaprenyl)benzoate + 2 oxidized [2Fe-2S]-[ferredoxin] + H2O. It carries out the reaction 2-methoxy-6-(all-trans-decaprenyl)phenol + 2 reduced [2Fe-2S]-[ferredoxin] + O2 + 2 H(+) = 2-methoxy-6-(all-trans-decaprenyl)benzene-1,4-diol + 2 oxidized [2Fe-2S]-[ferredoxin] + H2O. The protein operates within cofactor biosynthesis; ubiquinone biosynthesis. FAD-dependent monooxygenase required for two non-consecutive steps during ubiquinone biosynthesis. Required for the C5-ring hydroxylation during ubiquinone biosynthesis by catalyzing the hydroxylation of 4-hydroxy-3-(all-trans-decaprenyl)benzoic acid to 3,4-dihydroxy-5-(all-trans-decaprenyl)benzoic acid. Also acts downstream of COQ4, for the C1-hydroxylation during ubiquinone biosynthesis by catalyzing the hydroxylation of 2-methoxy-6-(all-trans-decaprenyl)phenol to 2-methoxy-6-(all-trans-decaprenyl)benzene-1,4-diol. The electrons required for the hydroxylation reaction are funneled indirectly to coq6 from NADPH via a ferredoxin/ferredoxin reductase system. This is Ubiquinone biosynthesis monooxygenase COQ6, mitochondrial from Schizosaccharomyces pombe (strain 972 / ATCC 24843) (Fission yeast).